The chain runs to 495 residues: RNA-binding KH domain-containing protein PEPPER (495 aa).

KH domains lie at 73–140, 165–234, and 340–403; these read DCVF…MDAV, FSSV…LEAI, and QVSQ…EQLI. Residues 474-495 are disordered; sequence GQTYGSEYRPASDVGGYSSYNL.

As to quaternary structure, interacts with HUA1 and HEN4. In terms of tissue distribution, detected in roots, shoots, leaves, flowers and fruits.

The protein localises to the nucleus. Its function is as follows. Regulates vegetative and gynoecium development. In concert with HUA2, antagonizes FLK by positively regulating FLC probably at transcriptional and post-transcriptional levels, and thus acts as a negative regulator of flowering. This is RNA-binding KH domain-containing protein PEPPER from Arabidopsis thaliana (Mouse-ear cress).